The primary structure comprises 337 residues: Mitochondrial glutathione transporter SLC25A40 (337 aa).

Solcar repeat units follow at residues Val14–Phe132, Asn140–Trp224, and Ser234–Phe328. The next 6 membrane-spanning stretches (helical) occupy residues Met20 to Val40, Leu104 to Thr124, Ile146 to Ile166, Trp200 to Leu221, Phe240 to Val260, and Gly299 to Ile319.

Belongs to the mitochondrial carrier (TC 2.A.29) family. As to expression, widely expressed at low level.

The protein localises to the mitochondrion inner membrane. It catalyses the reaction glutathione(in) = glutathione(out). In terms of biological role, probable mitochondrial transporter required for glutathione import into mitochondria. Glutathione, which plays key roles in oxidative metabolism, is produced exclusively in the cytosol and is imported in many organelles. Mitochondrial glutathione is required for the activity and stability of proteins containing iron-sulfur clusters, as well as erythropoiesis. The chain is Mitochondrial glutathione transporter SLC25A40 from Rattus norvegicus (Rat).